Consider the following 364-residue polypeptide: 3'(2'),5'-bisphosphate nucleotidase 1 (364 aa).

Aspartate 54 (proton acceptor) is an active-site residue. Mg(2+) contacts are provided by glutamate 77, aspartate 141, isoleucine 143, and aspartate 144. Catalysis depends on threonine 146, which acts as the Proton acceptor. 6 residues coordinate adenosine 3',5'-bisphosphate: threonine 146, histidine 243, serine 272, lysine 275, arginine 289, and aspartate 302. Histidine 243, serine 272, lysine 275, arginine 289, and aspartate 302 together coordinate AMP. Aspartate 302 provides a ligand contact to Mg(2+).

This sequence belongs to the inositol monophosphatase superfamily. Mg(2+) serves as cofactor.

It carries out the reaction 3'-phosphoadenylyl sulfate + H2O = adenosine 5'-phosphosulfate + phosphate. It catalyses the reaction adenosine 3',5'-bisphosphate + H2O = AMP + phosphate. The enzyme catalyses adenosine 2',5'-bisphosphate + H2O = AMP + phosphate. In terms of biological role, phosphatase that converts adenosine 3'-phosphate 5'-phosphosulfate (PAPS) to adenosine 5'-phosphosulfate (APS) and 3'(2')-phosphoadenosine 5'-phosphate (PAP) to AMP. Regulates the flux of sulfur in the sulfur-activation pathway by converting PAPS to APS. Involved in salt tolerance. The chain is 3'(2'),5'-bisphosphate nucleotidase 1 (HAL21) from Candida albicans (strain SC5314 / ATCC MYA-2876) (Yeast).